The chain runs to 429 residues: C4-dicarboxylate transport protein (429 aa).

8 helical membrane-spanning segments follow: residues 9–29, 45–65, 79–99, 149–169, 185–205, 223–243, 308–328, and 356–376; these read VLYV…HYYP, LIKM…IAGM, LLYF…ATHI, GEIL…AHLG, VLFG…FGAM, LIGT…GTIA, IYMT…LTWM, and AATL…ILGI.

The protein belongs to the dicarboxylate/amino acid:cation symporter (DAACS) (TC 2.A.23) family.

It localises to the cell inner membrane. Its function is as follows. Responsible for the transport of dicarboxylates such as succinate, fumarate, and malate from the periplasm across the membrane. The protein is C4-dicarboxylate transport protein of Burkholderia lata (strain ATCC 17760 / DSM 23089 / LMG 22485 / NCIMB 9086 / R18194 / 383).